The primary structure comprises 348 residues: Isopentenyl-diphosphate delta-isomerase (348 aa).

R11–K12 serves as a coordination point for substrate. FMN-binding positions include A70–T72, S100, and N131. Position 100–102 (S100–R102) interacts with substrate. Residue Q165 participates in substrate binding. Residue E166 participates in Mg(2+) binding. FMN contacts are provided by residues K197, T231, G278–R280, and A299–R300.

This sequence belongs to the IPP isomerase type 2 family. As to quaternary structure, homooctamer. Dimer of tetramers. FMN serves as cofactor. NADPH is required as a cofactor. Requires Mg(2+) as cofactor.

It is found in the cytoplasm. The enzyme catalyses isopentenyl diphosphate = dimethylallyl diphosphate. Functionally, involved in the biosynthesis of isoprenoids. Catalyzes the 1,3-allylic rearrangement of the homoallylic substrate isopentenyl (IPP) to its allylic isomer, dimethylallyl diphosphate (DMAPP). The chain is Isopentenyl-diphosphate delta-isomerase from Mycobacterium marinum (strain ATCC BAA-535 / M).